A 140-amino-acid polypeptide reads, in one-letter code: 6,7-dimethyl-8-ribityllumazine synthase (140 aa).

5-amino-6-(D-ribitylamino)uracil is bound by residues Phe-11, Ser-43 to Asp-45, and Cys-67 to Ile-69. Residue Asp-72–Thr-73 participates in (2S)-2-hydroxy-3-oxobutyl phosphate binding. His-75 acts as the Proton donor in catalysis. Residue Leu-100 participates in 5-amino-6-(D-ribitylamino)uracil binding. (2S)-2-hydroxy-3-oxobutyl phosphate is bound at residue Arg-115.

Belongs to the DMRL synthase family. In terms of assembly, forms an icosahedral capsid composed of 60 subunits, arranged as a dodecamer of pentamers.

The catalysed reaction is (2S)-2-hydroxy-3-oxobutyl phosphate + 5-amino-6-(D-ribitylamino)uracil = 6,7-dimethyl-8-(1-D-ribityl)lumazine + phosphate + 2 H2O + H(+). It participates in cofactor biosynthesis; riboflavin biosynthesis; riboflavin from 2-hydroxy-3-oxobutyl phosphate and 5-amino-6-(D-ribitylamino)uracil: step 1/2. Catalyzes the formation of 6,7-dimethyl-8-ribityllumazine by condensation of 5-amino-6-(D-ribitylamino)uracil with 3,4-dihydroxy-2-butanone 4-phosphate. This is the penultimate step in the biosynthesis of riboflavin. This Methanococcus vannielii (strain ATCC 35089 / DSM 1224 / JCM 13029 / OCM 148 / SB) protein is 6,7-dimethyl-8-ribityllumazine synthase.